Consider the following 362-residue polypeptide: Molybdenum import ATP-binding protein ModC (362 aa).

The ABC transporter domain occupies 2–236 (ASPIEVRLHM…LDLPLAMGGD (235 aa)). ATP is bound at residue 34–41 (GPSGSGKT). One can recognise a Mop domain in the interval 297-362 (QSSILNRLPV…AQIKAVAVLA (66 aa)).

It belongs to the ABC transporter superfamily. Molybdate importer (TC 3.A.1.8) family. In terms of assembly, the complex is composed of two ATP-binding proteins (ModC), two transmembrane proteins (ModB) and a solute-binding protein (ModA).

It localises to the cell inner membrane. The enzyme catalyses molybdate(out) + ATP + H2O = molybdate(in) + ADP + phosphate + H(+). In terms of biological role, part of the ABC transporter complex ModABC involved in molybdenum import. Responsible for energy coupling to the transport system. This is Molybdenum import ATP-binding protein ModC from Pseudomonas savastanoi pv. phaseolicola (strain 1448A / Race 6) (Pseudomonas syringae pv. phaseolicola (strain 1448A / Race 6)).